A 109-amino-acid polypeptide reads, in one-letter code: Lipoprotein BsmA (109 aa).

The signal sequence occupies residues 1–24 (MVSRKRNSVIYRFASLLLVLMLSA). Cys25 is lipidated: N-palmitoyl cysteine. Cys25 is lipidated: S-diacylglycerol cysteine.

It belongs to the BhsA/McbA family.

The protein localises to the cell membrane. In terms of biological role, involved in protection of biofilms against oxidative stress. The sequence is that of Lipoprotein BsmA (bsmA) from Escherichia coli (strain K12).